A 27-amino-acid polypeptide reads, in one-letter code: GFGSFLGKALKAALKIGANALGGSPQQ.

As to expression, expressed by the skin glands.

It localises to the secreted. In terms of biological role, antimicrobial peptide. This chain is Caerulein precursor fragment R4, found in Xenopus ruwenzoriensis (Uganda clawed frog).